A 312-amino-acid chain; its full sequence is Aspartate carbamoyltransferase catalytic subunit (312 aa).

Residues arginine 58 and threonine 59 each coordinate carbamoyl phosphate. Lysine 86 lines the L-aspartate pocket. Carbamoyl phosphate-binding residues include arginine 108, histidine 136, and glutamine 139. L-aspartate contacts are provided by arginine 169 and arginine 223. Carbamoyl phosphate is bound by residues glycine 264 and proline 265.

The protein belongs to the aspartate/ornithine carbamoyltransferase superfamily. ATCase family. As to quaternary structure, heterododecamer (2C3:3R2) of six catalytic PyrB chains organized as two trimers (C3), and six regulatory PyrI chains organized as three dimers (R2).

It catalyses the reaction carbamoyl phosphate + L-aspartate = N-carbamoyl-L-aspartate + phosphate + H(+). The protein operates within pyrimidine metabolism; UMP biosynthesis via de novo pathway; (S)-dihydroorotate from bicarbonate: step 2/3. Catalyzes the condensation of carbamoyl phosphate and aspartate to form carbamoyl aspartate and inorganic phosphate, the committed step in the de novo pyrimidine nucleotide biosynthesis pathway. The sequence is that of Aspartate carbamoyltransferase catalytic subunit from Syntrophomonas wolfei subsp. wolfei (strain DSM 2245B / Goettingen).